A 256-amino-acid chain; its full sequence is MIEIIPAIDLLKGSCVRLVQGDYNEVTEFNDNPSQQALLWQTLGAKRLHLVDLDGAKTGEPLNDSAIRKIKEKLSIPIQIGGGIRTIQRAEDLIELGVDRVILGTIAIENPNIIEKLSEKHPNKIVVGIDAKEGKVATRGWTNNCEMDATELVKRFSQTNIAAIICTDISTDGTLMGPNLDFLRELALISTVPLIASGGIGSISDILSILPLEQNGINGLIIGRALYDGAFDLAEALKVVKNQDLQDIVNANKDQA.

The Proton acceptor role is filled by D9. The active-site Proton donor is D130.

It belongs to the HisA/HisF family.

It localises to the cytoplasm. It carries out the reaction 1-(5-phospho-beta-D-ribosyl)-5-[(5-phospho-beta-D-ribosylamino)methylideneamino]imidazole-4-carboxamide = 5-[(5-phospho-1-deoxy-D-ribulos-1-ylimino)methylamino]-1-(5-phospho-beta-D-ribosyl)imidazole-4-carboxamide. It participates in amino-acid biosynthesis; L-histidine biosynthesis; L-histidine from 5-phospho-alpha-D-ribose 1-diphosphate: step 4/9. This Prochlorococcus marinus (strain SARG / CCMP1375 / SS120) protein is 1-(5-phosphoribosyl)-5-[(5-phosphoribosylamino)methylideneamino] imidazole-4-carboxamide isomerase.